The chain runs to 517 residues: Ovoinhibitor (517 aa).

7 Kazal-like domains span residues 67–132 (FGIE…ECRP), 133–197 (KHVT…ECKL), 198–263 (EIGS…KCRQ), 264–329 (EIPE…RCKE), 330–394 (RSTP…RCRE), 395–460 (EVPE…RCEE), and 461–517 (DITK…MAAC). Asn-72 carries N-linked (GlcNAc...) asparagine glycosylation. 21 cysteine pairs are disulfide-bonded: Cys-73–Cys-112, Cys-90–Cys-109, Cys-98–Cys-130, Cys-139–Cys-177, Cys-155–Cys-174, Cys-163–Cys-195, Cys-204–Cys-243, Cys-221–Cys-240, Cys-229–Cys-261, Cys-270–Cys-309, Cys-287–Cys-306, Cys-295–Cys-327, Cys-336–Cys-374, Cys-352–Cys-371, Cys-360–Cys-392, Cys-401–Cys-440, Cys-418–Cys-437, Cys-426–Cys-458, Cys-467–Cys-499, Cys-477–Cys-496, and Cys-485–Cys-517. N-linked (GlcNAc...) asparagine glycosylation is present at Asn-186. The N-linked (GlcNAc...) asparagine glycan is linked to Asn-506.

Post-translationally, glycosylated. In terms of tissue distribution, expressed in oviduct (at protein level). Expressed in egg white (at protein level). Expressed in egg yolk plasma of non-fertilized eggs (at protein level). Expressed in the magnum of the oviduct (at protein level). Expressed in oviduct. Expressed in liver. Expressed in the cortico-medullary border region of the bursa of Fabricius by the bursal secretory dendritic-like cells. Highly expressed in the magnum of the oviduct, and at a lower level in uterus. Weakly expressed in white isthmus and very weakly in infundibulum. Not expressed in duodenum and kidney.

The protein resides in the secreted. Serine protease inhibitor involved in antimicrobial egg defense preventing contamination of table eggs (non-fertilized eggs) and protecting the chick embryo (fertilized eggs). Inhibits trypsin, chymotrypsin, elastase, subtilisin and a proteinase of fungus Aspergillus oryzae. Inhibits calcium-activated potassium channels KCNMA1 (bovine) and slo (Drosophila). Has antibacterial activity against B.thuringiensis LMSA 3.06.004, but not against S.aureus CIP 103 811, P.aeruginosa PAO1, B.cereus ATCC6464 or B.subtilis ATCC 6633. The chain is Ovoinhibitor from Gallus gallus (Chicken).